A 125-amino-acid polypeptide reads, in one-letter code: Large ribosomal subunit protein bL12 (125 aa).

It belongs to the bacterial ribosomal protein bL12 family. As to quaternary structure, homodimer. Part of the ribosomal stalk of the 50S ribosomal subunit. Forms a multimeric L10(L12)X complex, where L10 forms an elongated spine to which 2 to 4 L12 dimers bind in a sequential fashion. Binds GTP-bound translation factors.

Functionally, forms part of the ribosomal stalk which helps the ribosome interact with GTP-bound translation factors. Is thus essential for accurate translation. This is Large ribosomal subunit protein bL12 from Azoarcus sp. (strain BH72).